The chain runs to 57 residues: Preprotein translocase subunit SecG (57 aa).

Residues 1-33 (MARRRKYEGLNPFVAAGLIKFSEEGELERIKLN) lie on the Cytoplasmic side of the membrane. The chain crosses the membrane as a helical span at residues 34 to 55 (PRTAILVSITVIIAILVLNILH). At 56–57 (PL) the chain is on the extracellular side.

It belongs to the SEC61-beta family. As to quaternary structure, component of the protein translocase complex. Heterotrimer consisting of alpha (SecY), beta (SecG) and gamma (SecE) subunits. Can form oligomers of the heterotrimer.

The protein localises to the cell membrane. Functionally, involved in protein export. The function of the beta subunit is unknown, but it may be involved in stabilization of the trimeric complex. In Pyrobaculum islandicum (strain DSM 4184 / JCM 9189 / GEO3), this protein is Preprotein translocase subunit SecG.